A 347-amino-acid polypeptide reads, in one-letter code: UDP-N-acetylenolpyruvoylglucosamine reductase (347 aa).

The FAD-binding PCMH-type domain occupies 24–195 (FDARARVAAR…VAVTFRLPKA (172 aa)). Arg171 is a catalytic residue. Ser247 functions as the Proton donor in the catalytic mechanism. Residue Glu343 is part of the active site.

Belongs to the MurB family. Requires FAD as cofactor.

It is found in the cytoplasm. The catalysed reaction is UDP-N-acetyl-alpha-D-muramate + NADP(+) = UDP-N-acetyl-3-O-(1-carboxyvinyl)-alpha-D-glucosamine + NADPH + H(+). The protein operates within cell wall biogenesis; peptidoglycan biosynthesis. Its function is as follows. Cell wall formation. The protein is UDP-N-acetylenolpyruvoylglucosamine reductase of Burkholderia mallei (strain NCTC 10247).